The chain runs to 264 residues: Ribosomal protein L11 methyltransferase (264 aa).

S-adenosyl-L-methionine-binding residues include Thr116, Gly137, Asp159, and Asn200.

The protein belongs to the methyltransferase superfamily. PrmA family.

Its subcellular location is the cytoplasm. It carries out the reaction L-lysyl-[protein] + 3 S-adenosyl-L-methionine = N(6),N(6),N(6)-trimethyl-L-lysyl-[protein] + 3 S-adenosyl-L-homocysteine + 3 H(+). Its function is as follows. Methylates ribosomal protein L11. The chain is Ribosomal protein L11 methyltransferase from Thermotoga maritima (strain ATCC 43589 / DSM 3109 / JCM 10099 / NBRC 100826 / MSB8).